The chain runs to 277 residues: Bifunctional protein FolD 1 (277 aa).

NADP(+)-binding positions include 162-164 and S187; that span reads GDS.

The protein belongs to the tetrahydrofolate dehydrogenase/cyclohydrolase family. As to quaternary structure, homodimer.

It catalyses the reaction (6R)-5,10-methylene-5,6,7,8-tetrahydrofolate + NADP(+) = (6R)-5,10-methenyltetrahydrofolate + NADPH. The enzyme catalyses (6R)-5,10-methenyltetrahydrofolate + H2O = (6R)-10-formyltetrahydrofolate + H(+). The protein operates within one-carbon metabolism; tetrahydrofolate interconversion. Its function is as follows. Catalyzes the oxidation of 5,10-methylenetetrahydrofolate to 5,10-methenyltetrahydrofolate and then the hydrolysis of 5,10-methenyltetrahydrofolate to 10-formyltetrahydrofolate. In Syntrophomonas wolfei subsp. wolfei (strain DSM 2245B / Goettingen), this protein is Bifunctional protein FolD 1.